A 134-amino-acid chain; its full sequence is Large ribosomal subunit protein eL32 (134 aa).

This sequence belongs to the eukaryotic ribosomal protein eL32 family.

This chain is Large ribosomal subunit protein eL32 (RPL32), found in Tetrahymena thermophila (strain SB210).